A 105-amino-acid chain; its full sequence is Small ribosomal subunit protein uS17 (105 aa).

This sequence belongs to the universal ribosomal protein uS17 family. In terms of assembly, part of the 30S ribosomal subunit.

Its function is as follows. One of the primary rRNA binding proteins, it binds specifically to the 5'-end of 16S ribosomal RNA. The sequence is that of Small ribosomal subunit protein uS17 from Thermus thermophilus (strain ATCC BAA-163 / DSM 7039 / HB27).